The following is a 145-amino-acid chain: Small ribosomal subunit protein uS12 (145 aa).

Belongs to the universal ribosomal protein uS12 family. Part of the 30S ribosomal subunit.

In terms of biological role, with S4 and S5 plays an important role in translational accuracy. Located at the interface of the 30S and 50S subunits. This chain is Small ribosomal subunit protein uS12, found in Cenarchaeum symbiosum (strain A).